A 95-amino-acid chain; its full sequence is Co-chaperonin GroES (95 aa).

This sequence belongs to the GroES chaperonin family. Heptamer of 7 subunits arranged in a ring. Interacts with the chaperonin GroEL.

The protein resides in the cytoplasm. Its function is as follows. Together with the chaperonin GroEL, plays an essential role in assisting protein folding. The GroEL-GroES system forms a nano-cage that allows encapsulation of the non-native substrate proteins and provides a physical environment optimized to promote and accelerate protein folding. GroES binds to the apical surface of the GroEL ring, thereby capping the opening of the GroEL channel. The chain is Co-chaperonin GroES from Syntrophotalea carbinolica (strain DSM 2380 / NBRC 103641 / GraBd1) (Pelobacter carbinolicus).